Reading from the N-terminus, the 128-residue chain is Large-conductance mechanosensitive channel (128 aa).

The next 2 membrane-spanning stretches (helical) occupy residues 10–30 (FAMR…GAFG) and 76–96 (GMFI…FLMI).

The protein belongs to the MscL family. In terms of assembly, homopentamer.

Its subcellular location is the cell inner membrane. Channel that opens in response to stretch forces in the membrane lipid bilayer. May participate in the regulation of osmotic pressure changes within the cell. This is Large-conductance mechanosensitive channel from Actinobacillus succinogenes (strain ATCC 55618 / DSM 22257 / CCUG 43843 / 130Z).